The chain runs to 397 residues: Acetate kinase 2 (397 aa).

Residue asparagine 8 participates in Mg(2+) binding. Lysine 15 is an ATP binding site. Arginine 89 serves as a coordination point for substrate. Aspartate 146 (proton donor/acceptor) is an active-site residue. Residues 206 to 210 (HLGNG), 281 to 283 (DLR), and 329 to 333 (GIGEN) contribute to the ATP site. Glutamate 382 contacts Mg(2+).

It belongs to the acetokinase family. Homodimer. Mg(2+) serves as cofactor. It depends on Mn(2+) as a cofactor.

The protein localises to the cytoplasm. It catalyses the reaction acetate + ATP = acetyl phosphate + ADP. Its pathway is metabolic intermediate biosynthesis; acetyl-CoA biosynthesis; acetyl-CoA from acetate: step 1/2. Its function is as follows. Catalyzes the formation of acetyl phosphate from acetate and ATP. Can also catalyze the reverse reaction. The sequence is that of Acetate kinase 2 from Listeria monocytogenes serotype 4b (strain F2365).